Reading from the N-terminus, the 201-residue chain is Lipopolysaccharide core heptose(II)-phosphate phosphatase (201 aa).

The N-terminal stretch at 1-35 (MLAFTLRFIKNKRYLATLAGALVIIAGLTSQHAWS) is a signal peptide.

Belongs to the phosphoglycerate mutase family. Ais subfamily.

It is found in the periplasm. It functions in the pathway bacterial outer membrane biogenesis; lipopolysaccharide metabolism. Its function is as follows. Catalyzes the dephosphorylation of heptose(II) of the outer membrane lipopolysaccharide core. In Salmonella newport (strain SL254), this protein is Lipopolysaccharide core heptose(II)-phosphate phosphatase.